The sequence spans 308 residues: Oxygen-dependent coproporphyrinogen-III oxidase (308 aa).

Residue Ser100 coordinates substrate. 2 residues coordinate a divalent metal cation: His104 and His114. The Proton donor role is filled by His114. 116-118 (NFR) provides a ligand contact to substrate. Residues His153 and His183 each coordinate a divalent metal cation. The tract at residues 248–283 (YVEFNLVFDRGTIFGLQSGGRTESILSSMPPIATWK) is important for dimerization. 266–268 (GGR) lines the substrate pocket.

This sequence belongs to the aerobic coproporphyrinogen-III oxidase family. In terms of assembly, homodimer. Requires a divalent metal cation as cofactor.

It localises to the cytoplasm. It carries out the reaction coproporphyrinogen III + O2 + 2 H(+) = protoporphyrinogen IX + 2 CO2 + 2 H2O. The protein operates within porphyrin-containing compound metabolism; protoporphyrin-IX biosynthesis; protoporphyrinogen-IX from coproporphyrinogen-III (O2 route): step 1/1. Involved in the heme biosynthesis. Catalyzes the aerobic oxidative decarboxylation of propionate groups of rings A and B of coproporphyrinogen-III to yield the vinyl groups in protoporphyrinogen-IX. In Francisella tularensis subsp. tularensis (strain FSC 198), this protein is Oxygen-dependent coproporphyrinogen-III oxidase.